We begin with the raw amino-acid sequence, 389 residues long: Phosphoribosylformylglycinamidine cyclo-ligase, chloroplastic (389 aa).

Residues methionine 1–aspartate 58 constitute a chloroplast transit peptide. The segment at arginine 46–serine 65 is disordered.

The protein belongs to the AIR synthase family.

It localises to the plastid. The protein resides in the chloroplast. It catalyses the reaction 2-formamido-N(1)-(5-O-phospho-beta-D-ribosyl)acetamidine + ATP = 5-amino-1-(5-phospho-beta-D-ribosyl)imidazole + ADP + phosphate + H(+). Its pathway is purine metabolism; IMP biosynthesis via de novo pathway; 5-amino-1-(5-phospho-D-ribosyl)imidazole from N(2)-formyl-N(1)-(5-phospho-D-ribosyl)glycinamide: step 2/2. This chain is Phosphoribosylformylglycinamidine cyclo-ligase, chloroplastic (PUR5), found in Arabidopsis thaliana (Mouse-ear cress).